The chain runs to 350 residues: Sterol-4-alpha-carboxylate 3-dehydrogenase ERG26, decarboxylating (350 aa).

NADP(+) is bound by residues 12–18, 63–64, and 85–87; these read GGSGFLG, DL, and SAS. Residues S125 and Y152 each contribute to the substrate site. NADP(+) is bound by residues Y152, K156, and 179-182; that span reads PAGI. Residue K156 is the Proton donor of the active site.

It belongs to the 3-beta-HSD family. As to quaternary structure, heterotetramer of ERG25, ERG26, ERG27 and ERG28. ERG28 acts as a scaffold to tether ERG27 and other 4,4-demethylation-related enzymes, forming a demethylation enzyme complex, in the endoplasmic reticulum.

Its subcellular location is the endoplasmic reticulum membrane. The catalysed reaction is 4beta-methylzymosterol-4alpha-carboxylate + NADP(+) = 3-dehydro-4-methylzymosterol + CO2 + NADPH. It functions in the pathway steroid biosynthesis; zymosterol biosynthesis; zymosterol from lanosterol: step 4/6. Its function is as follows. Sterol-4-alpha-carboxylate 3-dehydrogenase; part of the third module of ergosterol biosynthesis pathway that includes the late steps of the pathway. ERG26 is a catalytic component of the C-4 demethylation complex that catalyzes the oxidative decarboxylation that results in a reduction of the 3-beta-hydroxy group at the C-3 carbon to an oxo group. The third module or late pathway involves the ergosterol synthesis itself through consecutive reactions that mainly occur in the endoplasmic reticulum (ER) membrane. Firstly, the squalene synthase ERG9 catalyzes the condensation of 2 farnesyl pyrophosphate moieties to form squalene, which is the precursor of all steroids. Squalene synthase is crucial for balancing the incorporation of farnesyl diphosphate (FPP) into sterol and nonsterol isoprene synthesis. Secondly, the squalene epoxidase ERG1 catalyzes the stereospecific oxidation of squalene to (S)-2,3-epoxysqualene, which is considered to be a rate-limiting enzyme in steroid biosynthesis. Then, the lanosterol synthase ERG7 catalyzes the cyclization of (S)-2,3 oxidosqualene to lanosterol, a reaction that forms the sterol core. In the next steps, lanosterol is transformed to zymosterol through a complex process involving various demethylation, reduction and desaturation reactions. The lanosterol 14-alpha-demethylase ERG11 (also known as CYP51) catalyzes C14-demethylation of lanosterol to produce 4,4'-dimethyl cholesta-8,14,24-triene-3-beta-ol, which is critical for ergosterol biosynthesis. The C-14 reductase ERG24 reduces the C14=C15 double bond of 4,4-dimethyl-cholesta-8,14,24-trienol to produce 4,4-dimethyl-cholesta-8,24-dienol. 4,4-dimethyl-cholesta-8,24-dienol is substrate of the C-4 demethylation complex ERG25-ERG26-ERG27 in which ERG25 catalyzes the three-step monooxygenation required for the demethylation of 4,4-dimethyl and 4alpha-methylsterols, ERG26 catalyzes the oxidative decarboxylation that results in a reduction of the 3-beta-hydroxy group at the C-3 carbon to an oxo group, and ERG27 is responsible for the reduction of the keto group on the C-3. ERG28 has a role as a scaffold to help anchor ERG25, ERG26 and ERG27 to the endoplasmic reticulum and ERG29 regulates the activity of the iron-containing C4-methylsterol oxidase ERG25. Then, the sterol 24-C-methyltransferase ERG6 catalyzes the methyl transfer from S-adenosyl-methionine to the C-24 of zymosterol to form fecosterol. The C-8 sterol isomerase ERG2 catalyzes the reaction which results in unsaturation at C-7 in the B ring of sterols and thus converts fecosterol to episterol. The sterol-C5-desaturase ERG3 then catalyzes the introduction of a C-5 double bond in the B ring to produce 5-dehydroepisterol. The C-22 sterol desaturase ERG5 further converts 5-dehydroepisterol into ergosta-5,7,22,24(28)-tetraen-3beta-ol by forming the C-22(23) double bond in the sterol side chain. Finally, ergosta-5,7,22,24(28)-tetraen-3beta-ol is substrate of the C-24(28) sterol reductase ERG4 to produce ergosterol. This is Sterol-4-alpha-carboxylate 3-dehydrogenase ERG26, decarboxylating from Candida albicans (strain SC5314 / ATCC MYA-2876) (Yeast).